The primary structure comprises 388 residues: Putative N(4)-(beta-N-acetylglucosaminyl)-L-asparaginase GL17147 (388 aa).

The signal sequence occupies residues 1 to 20 (MYKAQYLWLFGLVLISRSAT). 2 cysteine pairs are disulfide-bonded: cysteine 94–cysteine 99 and cysteine 193–cysteine 209. Residue threonine 240 is the Nucleophile of the active site. Residues 268-271 (RVGD) and 291-294 (TGDG) contribute to the substrate site. Cysteines 351 and 378 form a disulfide.

The protein belongs to the Ntn-hydrolase family. As to quaternary structure, heterotetramer of two alpha and two beta chains arranged as a dimer of alpha/beta heterodimers. In terms of processing, cleaved into an alpha and beta chain by autocatalysis; this activates the enzyme. The N-terminal residue of the beta subunit is responsible for the nucleophile hydrolase activity.

The catalysed reaction is N(4)-(beta-N-acetyl-D-glucosaminyl)-L-asparagine + H2O = N-acetyl-beta-D-glucosaminylamine + L-aspartate + H(+). Functionally, cleaves the GlcNAc-Asn bond which joins oligosaccharides to the peptide of asparagine-linked glycoproteins. The protein is Putative N(4)-(beta-N-acetylglucosaminyl)-L-asparaginase GL17147 of Drosophila persimilis (Fruit fly).